The chain runs to 147 residues: Large ribosomal subunit protein bL9 (147 aa).

The protein belongs to the bacterial ribosomal protein bL9 family.

In terms of biological role, binds to the 23S rRNA. The chain is Large ribosomal subunit protein bL9 from Campylobacter jejuni subsp. doylei (strain ATCC BAA-1458 / RM4099 / 269.97).